A 595-amino-acid polypeptide reads, in one-letter code: NAD-dependent protein deacetylase hst4 (595 aa).

The segment at 1-106 (MAPRKTKPAT…HLDLTPRLGF (106 aa)) is disordered. Residues 9–32 (ATKPAAKPTPASTATTSSCPSPKS) are compositionally biased toward low complexity. One can recognise a Deacetylase sirtuin-type domain in the interval 109–428 (YGDQEPQLNL…SADVERVKNE (320 aa)). NAD(+) is bound by residues 134–153 (GAGI…DGLF) and 222–225 (QNID). The active-site Proton acceptor is the His-253. Residues Cys-261, Cys-264, Cys-283, and Cys-286 each coordinate Zn(2+). Residues 342-344 (GTS), 373-375 (NNE), and Cys-394 each bind NAD(+). Polar residues predominate over residues 445-473 (QAQTGMLTPSSSYDGDVENASTTTLSNPA). The interval 445-595 (QAQTGMLTPS…IPKGMGKLLD (151 aa)) is disordered. 2 stretches are compositionally biased toward basic and acidic residues: residues 478 to 492 (KLTE…DAPK) and 530 to 543 (TPEE…EHKA).

Belongs to the sirtuin family. Class I subfamily. Zn(2+) is required as a cofactor.

The protein localises to the nucleus. The catalysed reaction is N(6)-acetyl-L-lysyl-[protein] + NAD(+) + H2O = 2''-O-acetyl-ADP-D-ribose + nicotinamide + L-lysyl-[protein]. NAD-dependent histone deacetylase, which could function in telomeric silencing, cell cycle progression and chromosome stability. The chain is NAD-dependent protein deacetylase hst4 from Emericella nidulans (strain FGSC A4 / ATCC 38163 / CBS 112.46 / NRRL 194 / M139) (Aspergillus nidulans).